Reading from the N-terminus, the 245-residue chain is Lytic switch protein BZLF1 (245 aa).

Residues 1–167 are transactivation; it reads MMDPNSTSED…RTRKPQQPES (167 aa). 2 positions are modified to phosphothreonine; by host: Thr14 and Thr159. Positions 157 to 194 match the Bipartite nuclear localization signal motif; the sequence is RRTRKPQQPESLEECDSELEIKRYKNRVASRKCRAKFK. Ser167, Ser173, and Ser186 each carry phosphoserine; by host. The bZIP domain occupies 170-228; sequence ECDSELEIKRYKNRVASRKCRAKFKQLLQHYREVAAAKSSENDRLRLLLKQMCPSLDVD. The interval 178–195 is basic motif; sequence KRYKNRVASRKCRAKFKQ. Residues 196–228 are leucine-zipper; that stretch reads LLQHYREVAAAKSSENDRLRLLLKQMCPSLDVD. Positions 229–245 are accessory activation domain; it reads SIIPRTPDVLHEDLLNF.

This sequence belongs to the bZIP family. In terms of assembly, homodimer. Interacts (via b-ZIP domain) with the DNA polymerase processivity factor BMRF1 (via N-terminus); this interaction may inhibit BZLF1-induced transcription of the BMRF1 promoter. Interacts with human UBN1, CRTC2 and RACK1. Interacts (via N-terminus) with human PAX5 (via N-terminus); this interaction inhibits BZLF1-mediated lytic viral reactivation. Interacts (via leucine-zipper domain) with host CEBPA; this interaction induces G1 host cell cycle arrest. Interacts (via C-terminus) with host TP53BP1 (via C-terminus); this interaction is involved in the activation of the viral lytic cycle. Interacts with host chromatin-remodeling ATPase INO80; this interaction participates to the activation of early lytic viral genes by BZLF1. Interacts with host regulator of chromatin SMARCA5/hSNF2H; this interaction participates to the activation of early lytic viral genes by BZLF1. Interacts with host PLSCR1/Phospholipid scramblase 1; this interaction negatively regulates the transcriptional regulatory activity of BZLF1 by preventing the formation of the BZLF1-CBP complex.

It localises to the host nucleus. Functionally, transcription factor that acts as a molecular switch to induce the transition from the latent to the lytic or productive phase of the virus cycle. Mediates the switch from the latent to the lytic cycle of infection in cells containing a highly methylated viral genome. Probably binds to silenced chromatin and recruits host chromatin-remodeling enzymes. Regulates this switch by binding to 2 types of ZEBRA response elements (ZREs): the CpG-free AP-1 like elements (latency) and the methylated CpG-containing elements (lytic replication). Activates preferentially the methylated forms of the viral lytic R (BRLF1) and Na (BRRF1) gene promoters, the latters being the first genes activated during Z-mediated reactivation in latently infected cells. BZLF1 and BRLF1 act together to trigger lytic replication. Also binds the lytic origin of replication, oriLyt. Induces G1 cell cycle arrest by stabilizing the host CCAAT/enhancer binding protein CEBPA. This function is important because the lytic cycle preferentially takes place in host cells arrested in G1. This chain is Lytic switch protein BZLF1, found in Epstein-Barr virus (strain B95-8) (HHV-4).